The primary structure comprises 77 residues: Small ribosomal subunit protein bS21 (77 aa).

The protein belongs to the bacterial ribosomal protein bS21 family.

This Bartonella tribocorum (strain CIP 105476 / IBS 506) protein is Small ribosomal subunit protein bS21.